The chain runs to 1406 residues: DNA topoisomerase 2 (1406 aa).

ATP is bound by residues Asn-69, Asn-98, 126–128 (SSN), and 139–146 (GRNGYGAK). An interaction with DNA region spans residues 332-334 (KKK). 363–365 (QTK) serves as a coordination point for ATP. The Toprim domain occupies 441 to 555 (CTLILTEGDS…GLLDIPGFLI (115 aa)). Residues Glu-447, Asp-524, and Asp-526 each contribute to the Mg(2+) site. Residues 690 to 1159 (IPSVLDGFKP…SAKDLWNNDL (470 aa)) form the Topo IIA-type catalytic domain. Catalysis depends on Tyr-780, which acts as the O-(5'-phospho-DNA)-tyrosine intermediate. Positions 963–972 (KLISPISLQN) are interaction with DNA. Residues 1079–1089 (EDEDEDLEESE) are compositionally biased toward acidic residues. 4 disordered regions span residues 1079–1106 (EDED…VNGP), 1183–1215 (KTKG…KKIK), 1230–1287 (KIKA…DESG), and 1303–1406 (DEDA…FNDE). Positions 1090–1100 (EATRKKDKDDE) are enriched in basic and acidic residues. Residues 1204–1214 (KKKPARRIKKI) show a composition bias toward basic residues. Positions 1261–1274 (DVTSNASTPSTTIF) are enriched in polar residues. A compositionally biased stretch (basic residues) spans 1326–1336 (AKKKAPPKRKA). Composition is skewed to acidic residues over residues 1341 to 1359 (SSED…DEEV) and 1381 to 1406 (EISD…FNDE).

This sequence belongs to the type II topoisomerase family. Homodimer. Mg(2+) serves as cofactor. It depends on Mn(2+) as a cofactor. Ca(2+) is required as a cofactor.

Its subcellular location is the nucleus. The catalysed reaction is ATP-dependent breakage, passage and rejoining of double-stranded DNA.. Functionally, control of topological states of DNA by transient breakage and subsequent rejoining of DNA strands. Topoisomerase II makes double-strand breaks. In Candida glabrata (strain ATCC 2001 / BCRC 20586 / JCM 3761 / NBRC 0622 / NRRL Y-65 / CBS 138) (Yeast), this protein is DNA topoisomerase 2 (TOP2).